A 109-amino-acid polypeptide reads, in one-letter code: Cell division protein ZapA (109 aa).

Residues 21-97 are a coiled coil; that stretch reads PDQRDALNQA…QTIEQALLDQ (77 aa).

Belongs to the ZapA family. Type 1 subfamily. In terms of assembly, homodimer. Interacts with FtsZ.

It is found in the cytoplasm. Its function is as follows. Activator of cell division through the inhibition of FtsZ GTPase activity, therefore promoting FtsZ assembly into bundles of protofilaments necessary for the formation of the division Z ring. It is recruited early at mid-cell but it is not essential for cell division. The sequence is that of Cell division protein ZapA from Salmonella agona (strain SL483).